Reading from the N-terminus, the 243-residue chain is Adenosine 5'-phosphosulfate reductase (243 aa).

The protein belongs to the PAPS reductase family. CysH subfamily. The cofactor is [4Fe-4S] cluster.

It is found in the cytoplasm. The catalysed reaction is [thioredoxin]-disulfide + sulfite + AMP + 2 H(+) = adenosine 5'-phosphosulfate + [thioredoxin]-dithiol. It functions in the pathway sulfur metabolism; hydrogen sulfide biosynthesis; sulfite from sulfate. Its function is as follows. Catalyzes the formation of sulfite from adenosine 5'-phosphosulfate (APS) using thioredoxin as an electron donor. The sequence is that of Adenosine 5'-phosphosulfate reductase from Staphylococcus haemolyticus (strain JCSC1435).